Consider the following 288-residue polypeptide: Homoserine kinase (288 aa).

79–89 (PPARGLGSSSA) contributes to the ATP binding site.

This sequence belongs to the GHMP kinase family. Homoserine kinase subfamily.

Its subcellular location is the cytoplasm. The catalysed reaction is L-homoserine + ATP = O-phospho-L-homoserine + ADP + H(+). It functions in the pathway amino-acid biosynthesis; L-threonine biosynthesis; L-threonine from L-aspartate: step 4/5. Catalyzes the ATP-dependent phosphorylation of L-homoserine to L-homoserine phosphate. In Listeria monocytogenes serotype 4b (strain F2365), this protein is Homoserine kinase.